The sequence spans 316 residues: L-lactate dehydrogenase (316 aa).

Residues valine 16, aspartate 37, lysine 42, tyrosine 68, and 82–83 (GA) contribute to the NAD(+) site. Residues glutamine 85 and arginine 91 each contribute to the substrate site. NAD(+)-binding positions include serine 104, 121–123 (AAN), and serine 146. 123 to 126 (NPVD) is a binding site for substrate. 151–154 (DSAR) lines the substrate pocket. Beta-D-fructose 1,6-bisphosphate-binding residues include arginine 156 and histidine 171. The Proton acceptor role is filled by histidine 178. The residue at position 222 (tyrosine 222) is a Phosphotyrosine. Threonine 231 contacts substrate.

Belongs to the LDH/MDH superfamily. LDH family. In terms of assembly, homotetramer.

It is found in the cytoplasm. The enzyme catalyses (S)-lactate + NAD(+) = pyruvate + NADH + H(+). The protein operates within fermentation; pyruvate fermentation to lactate; (S)-lactate from pyruvate: step 1/1. Its activity is regulated as follows. Allosterically activated by fructose 1,6-bisphosphate (FBP). Catalyzes the conversion of lactate to pyruvate. The chain is L-lactate dehydrogenase from Staphylococcus epidermidis (strain ATCC 12228 / FDA PCI 1200).